Reading from the N-terminus, the 137-residue chain is ATP synthase epsilon chain, chloroplastic (137 aa).

The protein belongs to the ATPase epsilon chain family. F-type ATPases have 2 components, CF(1) - the catalytic core - and CF(0) - the membrane proton channel. CF(1) has five subunits: alpha(3), beta(3), gamma(1), delta(1), epsilon(1). CF(0) has three main subunits: a, b and c.

Its subcellular location is the plastid. It localises to the chloroplast thylakoid membrane. Its function is as follows. Produces ATP from ADP in the presence of a proton gradient across the membrane. In Bigelowiella natans (Pedinomonas minutissima), this protein is ATP synthase epsilon chain, chloroplastic.